The following is a 406-amino-acid chain: MTAPQTPNSFRTGPDERGRFGIFGGRFVAETLMPNILELERAYAEAKADPAFQAEMDSYLTHYVGRPSPLYFAERMSAHFGGAKIYFKREELNHTGSHKVNNVLGQILLARRMGKPRIIAETGAGQHGVATATLCARFGLKCVVYMGAVDVERQKPNVFRMKMLGAEVVPVQSGTRTLKDAMNEALRDWVTNVADTFYCIGTVAGPHPYPAMVRDFQAVIGRETKEQMLALEGRLPNSLVACIGGGSNAMGLFHPFLDDREVEIYGVEAAGRGVSTGLHAASLTGGRPGVLHGNRTYLLMNEDGQIADAHSISAGLDYPGIGPEHAWLHEMGRVTYLSATDQETLEAFRLCSLLEGIIPALEPAHALAKVAELAPTKPRDHLMVVNLSGRGDKDIPQVAEILGDAL.

At Lys-99 the chain carries N6-(pyridoxal phosphate)lysine.

This sequence belongs to the TrpB family. In terms of assembly, tetramer of two alpha and two beta chains. Pyridoxal 5'-phosphate is required as a cofactor.

It catalyses the reaction (1S,2R)-1-C-(indol-3-yl)glycerol 3-phosphate + L-serine = D-glyceraldehyde 3-phosphate + L-tryptophan + H2O. It functions in the pathway amino-acid biosynthesis; L-tryptophan biosynthesis; L-tryptophan from chorismate: step 5/5. Functionally, the beta subunit is responsible for the synthesis of L-tryptophan from indole and L-serine. The sequence is that of Tryptophan synthase beta chain from Methylobacterium nodulans (strain LMG 21967 / CNCM I-2342 / ORS 2060).